Reading from the N-terminus, the 879-residue chain is Alanine--tRNA ligase (879 aa).

Positions 566, 570, 668, and 672 each coordinate Zn(2+).

The protein belongs to the class-II aminoacyl-tRNA synthetase family. Zn(2+) is required as a cofactor.

It localises to the cytoplasm. It catalyses the reaction tRNA(Ala) + L-alanine + ATP = L-alanyl-tRNA(Ala) + AMP + diphosphate. Catalyzes the attachment of alanine to tRNA(Ala) in a two-step reaction: alanine is first activated by ATP to form Ala-AMP and then transferred to the acceptor end of tRNA(Ala). Also edits incorrectly charged Ser-tRNA(Ala) and Gly-tRNA(Ala) via its editing domain. The polypeptide is Alanine--tRNA ligase (Listeria innocua serovar 6a (strain ATCC BAA-680 / CLIP 11262)).